The sequence spans 116 residues: SPbeta prophage-derived uncharacterized protein YomQ (116 aa).

This Bacillus subtilis (strain 168) protein is SPbeta prophage-derived uncharacterized protein YomQ (yomQ).